The primary structure comprises 202 residues: Glycerol-3-phosphate acyltransferase (202 aa).

6 helical membrane-spanning segments follow: residues Met2–Ile22, Phe54–Leu74, Asn88–Phe108, Val120–Leu140, Tyr141–Ala161, and Leu162–Ile182.

This sequence belongs to the PlsY family. Probably interacts with PlsX.

The protein localises to the cell membrane. The catalysed reaction is an acyl phosphate + sn-glycerol 3-phosphate = a 1-acyl-sn-glycero-3-phosphate + phosphate. Its pathway is lipid metabolism; phospholipid metabolism. Functionally, catalyzes the transfer of an acyl group from acyl-phosphate (acyl-PO(4)) to glycerol-3-phosphate (G3P) to form lysophosphatidic acid (LPA). This enzyme utilizes acyl-phosphate as fatty acyl donor, but not acyl-CoA or acyl-ACP. In Staphylococcus saprophyticus subsp. saprophyticus (strain ATCC 15305 / DSM 20229 / NCIMB 8711 / NCTC 7292 / S-41), this protein is Glycerol-3-phosphate acyltransferase.